The sequence spans 198 residues: MIEFVYPHTQLVAGVDEVGRGPLVGAVVTAAVILDPARPIAGLNDSKKLSEKRRLALCEEIKEKALSWSLGRAEPHEIDELNILHATMLAMQRAVAGLHIAPEYVLIDGNRCPKLPMPAMVVVKGDSRVPEISAASILAKVTRDAEMAALDIVFPQYGFAQHKGYPTAFHLEKLAEHGATEHHRRSFGPVKRALGLAS.

The RNase H type-2 domain occupies 10–198 (QLVAGVDEVG…PVKRALGLAS (189 aa)). A divalent metal cation is bound by residues Asp16, Glu17, and Asp108.

The protein belongs to the RNase HII family. Requires Mn(2+) as cofactor. The cofactor is Mg(2+).

It localises to the cytoplasm. It catalyses the reaction Endonucleolytic cleavage to 5'-phosphomonoester.. Endonuclease that specifically degrades the RNA of RNA-DNA hybrids. In Shigella boydii serotype 4 (strain Sb227), this protein is Ribonuclease HII.